Reading from the N-terminus, the 52-residue chain is UPF0181 protein VPA0916 (52 aa).

Belongs to the UPF0181 family.

In Vibrio parahaemolyticus serotype O3:K6 (strain RIMD 2210633), this protein is UPF0181 protein VPA0916.